Consider the following 56-residue polypeptide: Large ribosomal subunit protein eL37 (56 aa).

Positions 19, 22, 34, and 37 each coordinate Zn(2+). The C4-type zinc-finger motif lies at 19-37; it reads CRRCGSVSLNVHTKQCTSC.

The protein belongs to the eukaryotic ribosomal protein eL37 family. Zn(2+) is required as a cofactor.

In terms of biological role, binds to the 23S rRNA. This Methanosarcina mazei (strain ATCC BAA-159 / DSM 3647 / Goe1 / Go1 / JCM 11833 / OCM 88) (Methanosarcina frisia) protein is Large ribosomal subunit protein eL37.